Here is a 913-residue protein sequence, read N- to C-terminus: Clumping factor B (913 aa).

The signal sequence occupies residues 1–44 (MKKRIDYLSNKQNKYSIRRFTVGTTSVIVGATILFGIGNHQAQA). The YSIRK-G/S signaling motif motif lies at 15-26 (YSIRRFTVGTTS). Composition is skewed to polar residues over residues 44-61 (ASEQ…NASA) and 68-95 (MIET…NVDS). The segment at 44–192 (ASEQSNDTTQ…QGTSKPSVRT (149 aa)) is disordered. A ligand binding A region region spans residues 45-542 (SEQSNDTTQS…GSADGDSAVN (498 aa)). Residues 96-119 (TTKPMSTQTSNTTTTEPASTNETP) show a composition bias toward low complexity. Positions 120–189 (QPTAIKNQAT…SNAQGTSKPS (70 aa)) are enriched in polar residues. The short motif at 272–276 (DYSNS) is the MIDAS-like motif element. Residues 530–885 (YGGGSADGDS…ETGDKSENTN (356 aa)) form a disordered region. Residues 545 to 555 (DPTPGPPVDPE) show a composition bias toward pro residues. Residues 556–837 (PSPDPEPEPT…SDSDSDSDSD (282 aa)) show a composition bias toward acidic residues. Residues 841 to 852 (RVTPPNNEQKAP) show a composition bias toward polar residues. The segment covering 869–882 (HKTDALPETGDKSE) has biased composition (basic and acidic residues). The short motif at 874–878 (LPETG) is the LPXTG sorting signal element. T877 carries the pentaglycyl murein peptidoglycan amidated threonine modification. Positions 878-913 (GDKSENTNATLFGAMMALLGSLLLFRKRKQDHKEKA) are cleaved as a propeptide — removed by sortase.

This sequence belongs to the serine-aspartate repeat-containing protein (SDr) family. In terms of processing, proteolytically cleaved by aureolysin (aur). This cleavage leads to the inactivation of ClfB.

It localises to the secreted. The protein localises to the cell wall. Functionally, cell surface-associated protein implicated in virulence by promoting bacterial attachment to both alpha- and beta-chains of human fibrinogen and inducing the formation of bacterial clumps. This Staphylococcus aureus (strain COL) protein is Clumping factor B (clfB).